A 78-amino-acid polypeptide reads, in one-letter code: Large ribosomal subunit protein bL28 (78 aa).

It belongs to the bacterial ribosomal protein bL28 family.

This chain is Large ribosomal subunit protein bL28, found in Prochlorococcus marinus (strain AS9601).